The following is a 397-amino-acid chain: Calponin-like protein clik-2 (397 aa).

Calponin-like repeat units follow at residues 29–54, 73–98, 119–144, 161–189, 209–234, and 255–280; these read LSQQ…RWNI, LRVQ…RFQV, IPKQ…RNQV, LCFQ…RQAT, TPWY…RDVL, and VPLQ…RNTQ. Residues 301 to 397 are disordered; that stretch reads EETKPPGSAS…EEEEEEEEDE (97 aa). A compositionally biased stretch (basic and acidic residues) spans 321–332; the sequence is KFEERESSRQSE. Acidic residues-rich tracts occupy residues 344 to 360 and 367 to 397; these read VEPE…EEKI and EEEE…EEDE.

The protein belongs to the calponin family. In terms of tissue distribution, expressed in pharyngeal muscle cells (at protein level).

Required for pharyngeal pumping. This chain is Calponin-like protein clik-2, found in Caenorhabditis elegans.